The following is a 506-amino-acid chain: ATP synthase subunit alpha, plastid (506 aa).

Residue 170–177 (GDRQTGKT) coordinates ATP.

This sequence belongs to the ATPase alpha/beta chains family. F-type ATPases have 2 components, CF(1) - the catalytic core - and CF(0) - the membrane proton channel. CF(1) has five subunits: alpha(3), beta(3), gamma(1), delta(1), epsilon(1). CF(0) has four main subunits: a, b, b' and c.

Its subcellular location is the plastid membrane. It carries out the reaction ATP + H2O + 4 H(+)(in) = ADP + phosphate + 5 H(+)(out). In terms of biological role, produces ATP from ADP in the presence of a proton gradient across the membrane. The alpha chain is a regulatory subunit. This is ATP synthase subunit alpha, plastid from Prototheca wickerhamii.